We begin with the raw amino-acid sequence, 28 residues long: Glutathione S-transferase 5 (28 aa).

One can recognise a GST N-terminal domain in the interval 1 to 28 (PNYKLTYFNLRGRAEISRYLFAYAGIKY). Residue tyrosine 7 coordinates glutathione.

This sequence belongs to the GST superfamily. Sigma family. Homodimer.

The protein localises to the cytoplasm. The catalysed reaction is RX + glutathione = an S-substituted glutathione + a halide anion + H(+). Functionally, conjugation of reduced glutathione to a wide number of exogenous and endogenous hydrophobic electrophiles. The sequence is that of Glutathione S-transferase 5 from Gallus gallus (Chicken).